The sequence spans 454 residues: tRNA modification GTPase MnmE (454 aa).

R23, E80, and K120 together coordinate (6S)-5-formyl-5,6,7,8-tetrahydrofolate. The 162-residue stretch at 216 to 377 (GMKVVIAGRP…LRNNLKQSMG (162 aa)) folds into the TrmE-type G domain. A K(+)-binding site is contributed by N226. Residues 226–231 (NAGKSS), 245–251 (TDIAGTT), 270–273 (DTAG), 335–338 (NKAD), and 358–360 (SAR) each bind GTP. A Mg(2+)-binding site is contributed by S230. Positions 245, 247, and 250 each coordinate K(+). T251 serves as a coordination point for Mg(2+). K454 contacts (6S)-5-formyl-5,6,7,8-tetrahydrofolate.

The protein belongs to the TRAFAC class TrmE-Era-EngA-EngB-Septin-like GTPase superfamily. TrmE GTPase family. Homodimer. Heterotetramer of two MnmE and two MnmG subunits. It depends on K(+) as a cofactor.

It is found in the cytoplasm. Its function is as follows. Exhibits a very high intrinsic GTPase hydrolysis rate. Involved in the addition of a carboxymethylaminomethyl (cmnm) group at the wobble position (U34) of certain tRNAs, forming tRNA-cmnm(5)s(2)U34. The protein is tRNA modification GTPase MnmE of Salmonella paratyphi A (strain ATCC 9150 / SARB42).